A 1958-amino-acid polypeptide reads, in one-letter code: Probable Rho GTPase-activating protein CG5521 (1958 aa).

Disordered stretches follow at residues 1-21 (MFTKKSHADVKKSTAKLQDSK), 400-424 (PPFLLEPNDDPPPPSNAGGTPRSQR), and 635-804 (GSVW…GIEG). Over residues 400–414 (PPFLLEPNDDPPPPS) the composition is skewed to pro residues. The segment covering 640-656 (GSGSNSAANGGSAASAA) has biased composition (low complexity). 3 positions are modified to phosphoserine: Ser718, Ser764, and Ser767. Residues 758-774 (DLRRAMSLDSLARKGDA) show a composition bias toward basic and acidic residues. Residues 775-785 (EETDSYQEGDN) show a composition bias toward acidic residues. A phosphoserine mark is found at Ser787, Ser791, Ser793, and Ser795. Residues 788-800 (GAGSRSPSPTASS) are compositionally biased toward polar residues. Tyr980 carries the phosphotyrosine modification. Positions 1534 to 1568 (HSTQAPSPALRHASSNSSLQQPDQRSLHSTTASFD) are disordered. Positions 1546–1568 (ASSNSSLQQPDQRSLHSTTASFD) are enriched in polar residues. Ser1551 carries the post-translational modification Phosphoserine. A Rap-GAP domain is found at 1612–1819 (LRNVDLQKCR…EERNRSLDSV (208 aa)). The disordered stretch occupies residues 1903 to 1958 (ATGMSSASPRGPRKLGAPFKSVTKKHSLQHIAVGGGAGAGGDTPPESPTLPQRRFK). Position 1945 is a phosphothreonine (Thr1945). Ser1949 is modified (phosphoserine).

The protein is Probable Rho GTPase-activating protein CG5521 of Drosophila melanogaster (Fruit fly).